Reading from the N-terminus, the 95-residue chain is Alpha-bungarotoxin isoform V31 (95 aa).

A signal peptide spans 1–21 (MKTLLLTLVVVTIVCLDLGYT). Disulfide bonds link C24–C44, C37–C65, C50–C54, C69–C80, and C81–C86.

It belongs to the three-finger toxin family. Long-chain subfamily. Type II alpha-neurotoxin sub-subfamily. As to quaternary structure, monomer in solution, homodimer in crystal state. In terms of tissue distribution, expressed by the venom gland.

Its subcellular location is the secreted. Functionally, binds with high affinity to muscular (alpha-1/CHRNA1) and neuronal (alpha-7/CHRNA7) nicotinic acetylcholine receptor (nAChR) and inhibits acetylcholine from binding to the receptor, thereby impairing neuromuscular and neuronal transmission. The protein is Alpha-bungarotoxin isoform V31 of Bungarus multicinctus (Many-banded krait).